The chain runs to 848 residues: MTDKHNEEGKEKKLKLPSKMIIGKHVDSKKFKTSYFTSHNNSVTVEIKGGRKFSSSSSLPHKINTQISTIDEFNEKISLLKKAASFAKSEEYRSNVTNFSSTVEVTEQQTEAENSTNINLSEQTIKNNSHQSSSNTIETTQEKKQNDDLSSNITPVEAITQLEPNQKILQNQQNSSSISLNSIISKPQNKSSIENNVEFETEATSTKSSAIWTKKNNSAKPKKSDIYQMLDSDSKSKTRSFAAIKRARDKEKRKLQNNALTKKIYREVIIPDTITVNELALRMSEKLSDVMQALLKLGIKANINQSIDVDTAELIAISLGHSVKRTQDSDVENILHSDKDTQDSLLPRAPIITVMGHVDHGKTCLLDALRSTDVISTEAGGITQHIGAYKVNLPNNKSITFIDTPGHEAFSEIRTRGAKVTDIVVLVIAANDGIKPQTIEAINHAKAAKVPILVAINKIDAPDANPDKVKNALLAHNIVPEDLGGETLVVPISALKKINLDKLEEAILLLADMLELKANPNALASGTVIESQVDHKSGVIATILVQRGTLKIGDILIAGNGFGKVKRMINDKNQQVNYAYPSDPVKILGLSQIPNAGDAVAVVQNEKQARSIVDYRIRKAKEEQDLKVHNISLEELLKQASANQFKELSLILKTDVHGSLEAIVASINKIVNDEVKIKILHAAVGVINESDIILANASNATILGFNVKIDSTASIKAERNKTNIKYYSIIYDLIDYVKSAVSGMLSPIIHEEYTGRAEVRAVFNITKVGKIAGCYVTKGYIQRNSKVKLLRNNEVIFSGPLQTLKRFKEHTKEVKEGFECGIELANYYDINVGDIIEAFIVTEEKAKL.

The segment at 106–150 (TEQQTEAENSTNINLSEQTIKNNSHQSSSNTIETTQEKKQNDDLS) is disordered. Residues 112–139 (AENSTNINLSEQTIKNNSHQSSSNTIET) show a composition bias toward polar residues. The 171-residue stretch at 347 to 517 (PRAPIITVMG…LLLADMLELK (171 aa)) folds into the tr-type G domain. Positions 356 to 363 (GHVDHGKT) are G1. GTP is bound at residue 356-363 (GHVDHGKT). Positions 381-385 (GITQH) are G2. The tract at residues 403–406 (DTPG) is G3. Residues 403 to 407 (DTPGH) and 457 to 460 (NKID) contribute to the GTP site. The G4 stretch occupies residues 457–460 (NKID). Residues 493-495 (SAL) are G5.

This sequence belongs to the TRAFAC class translation factor GTPase superfamily. Classic translation factor GTPase family. IF-2 subfamily.

The protein resides in the cytoplasm. In terms of biological role, one of the essential components for the initiation of protein synthesis. Protects formylmethionyl-tRNA from spontaneous hydrolysis and promotes its binding to the 30S ribosomal subunits. Also involved in the hydrolysis of GTP during the formation of the 70S ribosomal complex. This Orientia tsutsugamushi (strain Boryong) (Rickettsia tsutsugamushi) protein is Translation initiation factor IF-2.